A 78-amino-acid chain; its full sequence is Translational regulator CsrA (78 aa).

The protein belongs to the CsrA/RsmA family. In terms of assembly, homodimer; the beta-strands of each monomer intercalate to form a hydrophobic core, while the alpha-helices form wings that extend away from the core.

The protein resides in the cytoplasm. Functionally, a translational regulator that binds mRNA to regulate translation initiation and/or mRNA stability. Usually binds in the 5'-UTR at or near the Shine-Dalgarno sequence preventing ribosome-binding, thus repressing translation. Its main target seems to be the major flagellin gene, while its function is anatagonized by FliW. This is Translational regulator CsrA from Oleidesulfovibrio alaskensis (strain ATCC BAA-1058 / DSM 17464 / G20) (Desulfovibrio alaskensis).